A 339-amino-acid chain; its full sequence is Adenylosuccinate synthetase (339 aa).

GTP is bound by residues 12–18 and 42–44; these read GDEGKGS and GHS. D13 functions as the Proton acceptor in the catalytic mechanism. Mg(2+) is bound by residues D13 and G42. IMP contacts are provided by residues 13-16, 40-43, T127, R141, Q179, T194, and R256; these read DEGK and NAGH. The Proton donor role is filled by H43. 252 to 258 provides a ligand contact to substrate; it reads TVTGRRR. GTP contacts are provided by residues R258, 284-286, and 324-326; these read MLD and KTG.

Belongs to the adenylosuccinate synthetase family. Homodimer. Mg(2+) is required as a cofactor.

Its subcellular location is the cytoplasm. It catalyses the reaction IMP + L-aspartate + GTP = N(6)-(1,2-dicarboxyethyl)-AMP + GDP + phosphate + 2 H(+). The protein operates within purine metabolism; AMP biosynthesis via de novo pathway; AMP from IMP: step 1/2. Its function is as follows. Plays an important role in the de novo pathway of purine nucleotide biosynthesis. Catalyzes the first committed step in the biosynthesis of AMP from IMP. This Thermococcus onnurineus (strain NA1) protein is Adenylosuccinate synthetase.